The sequence spans 324 residues: MKFAKISQVAHYAPEQVVTNDDLAQIMDTSDEWISSRTGIKKRHISHHESTSDLATRVALDLLKKSEISAQDLDFIIVATITPDSLMPSTAARVQANIGAKKAFAYDLVAACSGFVFALSTAEKLISSGAYQKGLVIGSETLSKVVDWSDRGTAVLFGDGAGGVLLESTSDQHFLAEIQKTDGSRGESLTSCLMGLQSPFAQTEDDEKYLTMDGRAIFDFAIRDVAQSIKDTIEASPLEVDEIDYFLLHQANDRILNKIAKKLSVSRDKIPANMMEYGNTSAASIPILLSECVEQGLVKLDGSQKILLSGFGGGLTWGTLIVTI.

Catalysis depends on residues Cys-112 and His-249. An ACP-binding region spans residues 250–254 (QANDR). Residue Asn-279 is part of the active site.

This sequence belongs to the thiolase-like superfamily. FabH family. As to quaternary structure, homodimer.

It localises to the cytoplasm. The catalysed reaction is malonyl-[ACP] + acetyl-CoA + H(+) = 3-oxobutanoyl-[ACP] + CO2 + CoA. It functions in the pathway lipid metabolism; fatty acid biosynthesis. Its function is as follows. Catalyzes the condensation reaction of fatty acid synthesis by the addition to an acyl acceptor of two carbons from malonyl-ACP. Catalyzes the first condensation reaction which initiates fatty acid synthesis and may therefore play a role in governing the total rate of fatty acid production. Possesses both acetoacetyl-ACP synthase and acetyl transacylase activities. Its substrate specificity determines the biosynthesis of branched-chain and/or straight-chain of fatty acids. The chain is Beta-ketoacyl-[acyl-carrier-protein] synthase III from Streptococcus gordonii (strain Challis / ATCC 35105 / BCRC 15272 / CH1 / DL1 / V288).